Reading from the N-terminus, the 198-residue chain is Recombination protein RecR (198 aa).

Residues 57–72 form a C4-type zinc finger; the sequence is CRQCRTLSEEELCPQC. A Toprim domain is found at 80 to 174; it reads SLLCVVEGPL…TLSRIAHGVP (95 aa).

Belongs to the RecR family.

May play a role in DNA repair. It seems to be involved in an RecBC-independent recombinational process of DNA repair. It may act with RecF and RecO. The protein is Recombination protein RecR of Pseudomonas aeruginosa (strain LESB58).